Consider the following 194-residue polypeptide: Glycerol-3-phosphate acyltransferase (194 aa).

The next 5 membrane-spanning stretches (helical) occupy residues 2-22 (LIEI…TGLL), 51-71 (SVGI…VLAA), 80-100 (WIAL…FLGF), 112-132 (VFLG…VAVV), and 155-175 (FLSG…LVIW).

It belongs to the PlsY family. As to quaternary structure, probably interacts with PlsX.

Its subcellular location is the cell inner membrane. It catalyses the reaction an acyl phosphate + sn-glycerol 3-phosphate = a 1-acyl-sn-glycero-3-phosphate + phosphate. It participates in lipid metabolism; phospholipid metabolism. Functionally, catalyzes the transfer of an acyl group from acyl-phosphate (acyl-PO(4)) to glycerol-3-phosphate (G3P) to form lysophosphatidic acid (LPA). This enzyme utilizes acyl-phosphate as fatty acyl donor, but not acyl-CoA or acyl-ACP. This chain is Glycerol-3-phosphate acyltransferase, found in Geobacter metallireducens (strain ATCC 53774 / DSM 7210 / GS-15).